The sequence spans 132 residues: Cliotide T2 (132 aa).

An N-terminal signal peptide occupies residues 1–28 (MAYVRLTSLAVLFFLAASVMLNVKKTEG). Positions 29-58 (GEFLKCGESCVQGECYTPGCSCDWPICKKN) form a cross-link, cyclopeptide (Gly-Asn). Cystine bridges form between C34-C48, C38-C50, and C43-C55. Residues 59-132 (HIIATNAKTV…NLKMPMTIIN (74 aa)) constitute a propeptide, removed in mature form.

In terms of processing, this is a cyclic peptide. Expressed in flower, stem, shoot and pod but not in root, leaf, seed and nodule (at protein level).

Functionally, probably participates in a plant defense mechanism. Not active against Gram-negative bacteria E.coli ATCC 700926, K.pneumoniae ATTC 13883 and P.aeruginosa ATCC 39018 at concentration up to 100 uM. Has cytotoxic but no hemolytic activity. In Clitoria ternatea (Butterfly pea), this protein is Cliotide T2.